Consider the following 140-residue polypeptide: uncharacterized protein (140 aa).

2 consecutive transmembrane segments (helical) span residues 26 to 43 and 64 to 86; these read YLDL…TGVI and LLNF…NGVL.

The protein belongs to the bacteriophage holin family. Cp-1 holin subfamily.

Its subcellular location is the cell membrane. This is an uncharacterized protein from Bacillus subtilis (strain 168).